The following is an 802-amino-acid chain: MSDENHNSDVQDIPSPELSVDSNSNENELMNNSSADDGIEFDAPEEEREAEREEENEEQHELEDVNDEEEEDKEEKGEENGEVINTEEEEEEEHQQKGGNDDDDDDNEEEEEEEEDDDDDDDDDDDDEEEEEEEEEEGNDNSSVGSDSAAEDGEDEEDKKDKTKDKEVELRRETLEKEQKDVDEAIKKITREENDNTHFPTNMENVNYDLLQKQVKYIMDSNMLNLPQFQHLPQEEKMSAILAMLNSNSDTALSVPPHDSTISTTASASATSGARSNDQRKPPLSDAQRRMRFPRADLSKPITEEEHDRYAAYLHGENKITEMHNIPPKSRLFIGNLPLKNVSKEDLFRIFSPYGHIMQINIKNAFGFIQFDNPQSVRDAIECESQEMNFGKKLILEVSSSNARPQFDHGDHGTNSSSTFISSAKRPFQTESGDMYNDDNGAGYKKSRRHTVSCNIFVKRTADRTYAIEVFNRFRDGTGLETDMIFLKPRMELGKLINDAAYNGVWGVVLVNKTHNVDVQTFYKGSQGETKFDEYISISADDAVAIFNNIKNNRNNSRPTDYRAMSHQQNIYGAPPLPVPNGPAVGPPPQTNYYQGYSMPPPQQQQQQPYGNYGMPPPSHDQGYGSQPPIPMNQSYGRYQTSIPPPPPQQQIPQGYGRYQAGPPPQPPSQTPMDQQQLLSAIQNLPPNVVSNLLSMAQQQQQQPHAQQQLVGLIQSMQGQAPQQQQQQLGGYSSMNSSSPPPMSTNYNGQNISAKPSAPPMSHQPPPPQQQQQQQQQQQQQQQQPAGNNVQSLLDSLAKLQK.

Disordered stretches follow at residues 1–174 and 252–293; these read MSDE…RRET and ALSV…RMRF. The segment covering 22 to 34 has biased composition (low complexity); it reads SNSNENELMNNSS. The segment covering 37-73 has biased composition (acidic residues); the sequence is DGIEFDAPEEEREAEREEENEEQHELEDVNDEEEEDK. Residue Thr86 is modified to Phosphothreonine. Acidic residues-rich tracts occupy residues 101–139 and 149–158; these read DDDD…EEGN and AAEDGEDEED. Positions 159–174 are enriched in basic and acidic residues; sequence KKDKTKDKEVELRRET. The segment covering 260–276 has biased composition (low complexity); sequence STISTTASASATSGARS. The span at 277-293 shows a compositional bias: basic and acidic residues; the sequence is NDQRKPPLSDAQRRMRF. The RRM domain occupies 330–401; that stretch reads SRLFIGNLPL…KKLILEVSSS (72 aa). Thr451 is subject to Phosphothreonine. 2 disordered regions span residues 571–675 and 717–802; these read IYGA…PMDQ and MQGQ…KLQK. Over residues 575-590 the composition is skewed to pro residues; that stretch reads PPLPVPNGPAVGPPPQ. Low complexity predominate over residues 593-614; that stretch reads YYQGYSMPPPQQQQQQPYGNYG. Positions 632–642 are enriched in polar residues; that stretch reads MNQSYGRYQTS. 2 stretches are compositionally biased toward low complexity: residues 651–661 and 717–738; these read QIPQGYGRYQA and MQGQ…MNSS. Residues 745–754 are compositionally biased toward polar residues; it reads TNYNGQNISA. Positions 757-769 are enriched in pro residues; sequence SAPPMSHQPPPPQ. Positions 770-785 are enriched in low complexity; it reads QQQQQQQQQQQQQQQP.

The protein resides in the nucleus. The protein localises to the nucleoplasm. May be required for packaging pre-mRNAs into ribonucleoprotein structures amenable to efficient nuclear RNA processing. Binds to poly(A)+ RNA. Appears to act in the maintenance of CLN3 mRNA levels. This is Nuclear polyadenylated RNA-binding protein 3 (NAB3) from Saccharomyces cerevisiae (strain ATCC 204508 / S288c) (Baker's yeast).